The sequence spans 65 residues: Alpha-insect toxin BotIT1 (65 aa).

In terms of domain architecture, LCN-type CS-alpha/beta spans 2–64 (RDAYIAQNYN…VPIRIPGKCH (63 aa)). Intrachain disulfides connect cysteine 12-cysteine 63, cysteine 16-cysteine 36, cysteine 22-cysteine 46, and cysteine 26-cysteine 48.

Belongs to the long (4 C-C) scorpion toxin superfamily. Sodium channel inhibitor family. Alpha subfamily. As to expression, expressed by the venom gland.

Its subcellular location is the secreted. Alpha toxins bind voltage-independently at site-3 of sodium channels (Nav) and inhibit the inactivation of the activated channels, thereby blocking neuronal transmission. This contractive toxin is highly toxic to insects and barely toxic to mammals. This is Alpha-insect toxin BotIT1 from Buthus occitanus tunetanus (Common European scorpion).